Reading from the N-terminus, the 144-residue chain is Large ribosomal subunit protein uL11 (144 aa).

The protein belongs to the universal ribosomal protein uL11 family. In terms of assembly, part of the ribosomal stalk of the 50S ribosomal subunit. Interacts with L10 and the large rRNA to form the base of the stalk. L10 forms an elongated spine to which L12 dimers bind in a sequential fashion forming a multimeric L10(L12)X complex. Post-translationally, one or more lysine residues are methylated.

In terms of biological role, forms part of the ribosomal stalk which helps the ribosome interact with GTP-bound translation factors. The sequence is that of Large ribosomal subunit protein uL11 from Corynebacterium glutamicum (strain R).